A 1181-amino-acid chain; its full sequence is Integrin alpha-7 (1181 aa).

An N-terminal signal peptide occupies residues 1–33; it reads MAGARSRDPWGASGICYLFGSLLVELLFSRAVA. The Extracellular segment spans residues 34 to 1082; it reads FNLDVMGALR…MAVVAEGVPW (1049 aa). FG-GAP repeat units follow at residues 35–103, 110–175, 185–238, 292–349, 350–411, 412–467, and 471–530; these read NLDV…ETDC, QGAD…IRDE, EGRP…SADL, DRLP…ASRL, VPEV…HWAG, ISPL…GVVA, and QVLE…IAPR. N-linked (GlcNAc...) asparagine glycosylation is present at Asn-86. Intrachain disulfides connect Cys-94/Cys-103, Cys-140/Cys-163, and Cys-184/Cys-197. Positions 372, 374, 376, 380, 434, 436, 438, 442, 492, 494, 496, 498, and 500 each coordinate Ca(2+). Disulfide bonds link Cys-539/Cys-546, Cys-552/Cys-615, Cys-681/Cys-687, Cys-781/Cys-792, Cys-939/Cys-994, and Cys-1001/Cys-1006. Residue Asn-786 is glycosylated (N-linked (GlcNAc...) asparagine). Residues 950 to 961 show a composition bias toward basic and acidic residues; sequence VDSRDRRRRELE. Positions 950–978 are disordered; sequence VDSRDRRRRELEPPEQQEPGERQEPSMSW. A glycan (N-linked (GlcNAc...) asparagine) is linked at Asn-989. 2 N-linked (GlcNAc...) asparagine glycosylation sites follow: Asn-1025 and Asn-1045. A helical membrane pass occupies residues 1083 to 1103; it reads WVILLAVLAGLLVLALLVLLL. Over 1104–1181 the chain is Cytoplasmic; that stretch reads WKMGFFKRAK…PDGHPGPGTA (78 aa). Positions 1107–1111 match the GFFKR motif motif; that stretch reads GFFKR. Residues 1138–1181 form a disordered region; it reads EKTGTILRNNWGSPRREGPDAHPILAADGHPELGPDGHPGPGTA. 3 tandem repeats follow at residues 1157-1160, 1165-1168, and 1173-1176. Residues 1157-1176 form a 3 X 4 AA repeats of D-X-H-P region; it reads DAHPILAADGHPELGPDGHP.

This sequence belongs to the integrin alpha chain family. As to quaternary structure, heterodimer of an alpha and a beta subunit. The alpha subunit is composed of a heavy and a light chain linked by a disulfide bond. Alpha-7 associates with beta-1. Interacts with COMP. Interacts (via C-terminus intracellular tail region) with CIB1; the interaction is stabilized/increased in a calcium- and magnesium-dependent manner. Post-translationally, ADP-ribosylated on at least two sites of the extracellular domain in skeletal myotubes. A 70 kDa form is created by proteolytic cleavage. Cleavage is elevated during myogenic differentiation and the cleaved form enhances cell adhesion and spreading on laminin. Isoforms containing segment A are predominantly expressed in skeletal muscle. Isoforms containing segment B are abundantly expressed in skeletal muscle, moderately in cardiac muscle, small intestine, colon, ovary and prostate and weakly in lung and testes. Isoforms containing segment X2D are expressed at low levels in fetal and adult skeletal muscle and in cardiac muscle, but are not detected in myoblasts and myotubes. In muscle fibers isoforms containing segment A and B are expressed at myotendinous and neuromuscular junctions; isoforms containing segment C are expressed at neuromuscular junctions and at extrasynaptic sites. Isoforms containing segments X1 or X2 or, at low levels, X1X2 are expressed in fetal and adult skeletal muscle (myoblasts and myotubes) and cardiac muscle.

The protein resides in the membrane. Functionally, integrin alpha-7/beta-1 is the primary laminin receptor on skeletal myoblasts and adult myofibers. During myogenic differentiation, it may induce changes in the shape and mobility of myoblasts, and facilitate their localization at laminin-rich sites of secondary fiber formation. It is involved in the maintenance of the myofibers cytoarchitecture as well as for their anchorage, viability and functional integrity. Isoform Alpha-7X2B and isoform Alpha-7X1B promote myoblast migration on laminin 1 and laminin 2/4, but isoform Alpha-7X1B is less active on laminin 1 (In vitro). Acts as a Schwann cell receptor for laminin-2. Acts as a receptor of COMP and mediates its effect on vascular smooth muscle cells (VSMCs) maturation. Required to promote contractile phenotype acquisition in differentiated airway smooth muscle (ASM) cells. This is Integrin alpha-7 (ITGA7) from Homo sapiens (Human).